The primary structure comprises 399 residues: Serine/threonine-protein kinase PKZ1 (399 aa).

The interval 30 to 50 (PMQCAYQTQSHSNPEGAKRGR) is disordered. Residues 92–371 (WQLFDQIGAG…ADQMLQHPWM (280 aa)) form the Protein kinase domain. ATP-binding positions include 98 to 106 (IGAGAFGVV) and Lys-121. Catalysis depends on Asp-219, which acts as the Proton acceptor.

Belongs to the protein kinase superfamily. CAMK Ser/Thr protein kinase family.

The enzyme catalyses L-seryl-[protein] + ATP = O-phospho-L-seryl-[protein] + ADP + H(+). It catalyses the reaction L-threonyl-[protein] + ATP = O-phospho-L-threonyl-[protein] + ADP + H(+). May regulate an early stage of the zoospore pathway. The chain is Serine/threonine-protein kinase PKZ1 from Phytophthora infestans (strain T30-4) (Potato late blight agent).